Here is a 199-residue protein sequence, read N- to C-terminus: MRLCDKDILTHLQEGKISITPEPDYAEISGVTVDIRLGNKFRVFTEHQAPYIDLSGPKAQVQEALNTVMSDEISVGQDKSFYLHPGELALAVTLESVTLPGNIVGWLDGRSSLARLGLMVHVTAHRIDPGWSGNIVLEFFNSGKLPLALKPGMKIGALSFEVMSDFAEKPYNARVDAKYKNQEGAIASRISGDDKTSTQ.

DCTP-binding positions include 110–115, aspartate 128, 136–138, tyrosine 171, and glutamine 182; these read RSSLAR and VLE. Residue glutamate 138 is the Proton donor/acceptor of the active site.

It belongs to the dCTP deaminase family. As to quaternary structure, homotrimer.

The catalysed reaction is dCTP + H2O + H(+) = dUTP + NH4(+). It functions in the pathway pyrimidine metabolism; dUMP biosynthesis; dUMP from dCTP (dUTP route): step 1/2. Functionally, catalyzes the deamination of dCTP to dUTP. The protein is dCTP deaminase of Pseudoalteromonas atlantica (strain T6c / ATCC BAA-1087).